A 1400-amino-acid polypeptide reads, in one-letter code: Tensin-2 (1400 aa).

A Phorbol-ester/DAG-type zinc finger spans residues 31–79; sequence PHSFREKVFRKKTPVCAVCKVTIDGTGVSCRVCKVATHRKCEAKVTSSC. Thr-91 is modified (phosphothreonine). Phosphoserine occurs at positions 118 and 120. Positions 122–294 constitute a Phosphatase tensin-type domain; the sequence is DPLMERRWDL…SYFSGLLSGS (173 aa). Residue Cys-231 is the Phosphocysteine intermediate of the active site. The 127-residue stretch at 299 to 425 folds into the C2 tensin-type domain; sequence SSPLFLHYVF…ASVEFVFSSS (127 aa). The interval 425–444 is disordered; the sequence is SPEKVKGNTPRNDPSVSVDY. The span at 433 to 444 shows a compositional bias: polar residues; that stretch reads TPRNDPSVSVDY. A Phosphoserine modification is found at Ser-455. Tyr-456 carries the post-translational modification Phosphotyrosine. At Ser-466 the chain carries Phosphoserine. Thr-474 bears the Phosphothreonine mark. Phosphoserine is present on Ser-481. A Phosphotyrosine modification is found at Tyr-483. The segment at 488–536 is disordered; the sequence is RVPRQTPPAPSPELPPPPMLSVSSDSGHSSTLTTEHTAESPGRPPPTAA. Over residues 492 to 506 the composition is skewed to pro residues; that stretch reads QTPPAPSPELPPPPM. Arg-555 carries the omega-N-methylarginine modification. The tract at residues 809-1114 is disordered; it reads CGSPSEGRGY…DVTQPPEHPL (306 aa). 5 positions are modified to phosphoserine: Ser-820, Ser-825, Ser-830, Ser-832, and Ser-835. Composition is skewed to polar residues over residues 898-917 and 929-940; these read CSAS…SSPV and TRSPSLAPTQRL. Thr-909 carries the phosphothreonine modification. 3 positions are modified to phosphoserine: Ser-931, Ser-941, and Ser-972. Phosphothreonine is present on Thr-977. 2 positions are modified to phosphoserine: Ser-991 and Ser-1003. Over residues 1046 to 1056 the composition is skewed to pro residues; sequence PEPPQSSPTPA. The segment covering 1082-1098 has biased composition (polar residues); sequence SGQQPSPPARSTNQHVT. Phosphoserine is present on Ser-1087. One can recognise an SH2 domain in the interval 1131 to 1238; it reads WYKPHLSRDQ…SLPCCLRIPS (108 aa). Thr-1173 is subject to Phosphothreonine. Residue Ser-1238 is modified to Phosphoserine. The 134-residue stretch at 1266–1399 folds into the PTB domain; the sequence is ACSVLYLTSV…FITKVLLGQR (134 aa).

This sequence belongs to the PTEN phosphatase protein family. As to quaternary structure, interacts with AXL. Interacts with SYK; leading to its phosphorylation. Interacts with SQSTM1 (via PB1 domain); the interaction leads to sequestration of TNS2 in cytoplasmic aggregates with SQSTM1 and promotes TNS2 ubiquitination and proteasomal degradation. Ubiquitinated following sequestration in cytoplasmic aggregates with SQSTM1, leading to proteasomal degradation. In terms of tissue distribution, in the adult kidney, expressed mainly in glomeruli (at protein level). In the newborn kidney, localizes on the basal surface of podocytes along the glomerular basement membrane and not in endothelial cells. Low expression levels in anabolic skeletal muscles.

The protein localises to the cell junction. Its subcellular location is the focal adhesion. The protein resides in the cell membrane. It is found in the cytoplasm. The catalysed reaction is O-phospho-L-tyrosyl-[protein] + H2O = L-tyrosyl-[protein] + phosphate. Tyrosine-protein phosphatase which regulates cell motility, proliferation and muscle-response to insulin. Phosphatase activity is mediated by binding to phosphatidylinositol-3,4,5-triphosphate (PtdIns(3,4,5)P3) via the SH2 domain. In muscles and under catabolic conditions, dephosphorylates IRS1 leading to its degradation and muscle atrophy. Negatively regulates PI3K-AKT pathway activation. Dephosphorylates nephrin NPHS1 in podocytes which affects mTORC1 complex activity. Under normal glucose conditions, NPHS1 outcompetes IRS1 for binding to phosphatidylinositol 3-kinase (PI3K) which balances mTORC1 activity but high glucose conditions lead to up-regulation of TNS2, increased NPHS1 dephosphorylation and activation of mTORC1, contributing to podocyte hypertrophy and proteinuria. Required for correct podocyte morphology, podocyte-glomerular basement membrane interaction and integrity of the glomerular filtration barrier. Enhances RHOA activation in the presence of DLC1. Plays a role in promoting DLC1-dependent remodeling of the extracellular matrix. This Mus musculus (Mouse) protein is Tensin-2 (Tns2).